The chain runs to 246 residues: Envelope glycoprotein gp95 (246 aa).

Residues 1 to 192 (IPSRPVGGPC…EWAVHLLKGL (192 aa)) lie on the Extracellular side of the membrane. A glycan (N-linked (GlcNAc...) asparagine; by host) is linked at N31. The cysteines at positions 50 and 86 are disulfide-linked. Positions 58-78 (GPTARIFASILAPGVAAAQAL) are fusion peptide. Residues 75–125 (AQALKEIERLACWSVKQANLTTSLLGDLLDDVTSIRHAVLQNRAAIDFLLL) adopt a coiled-coil conformation. An N-linked (GlcNAc...) asparagine; by host glycan is attached at N93. The interval 114–130 (LQNRAAIDFLLLAHGHG) is immunosuppression. C131 and C138 are joined by a disulfide. Residue N141 is glycosylated (N-linked (GlcNAc...) asparagine; by host). Residues 143 to 173 (SDHSESIQKKFQLMKEHVNKIGVDSDPIGSW) adopt a coiled-coil conformation. Residues 193–213 (LLGLVVILLLVVCLPCLLQIV) traverse the membrane as a helical segment. S-palmitoyl cysteine; by host attachment occurs at residues C205 and C208. Topologically, residues 214–246 (CGNIRKMINNSISYHTEYKKLQKAYGQPESRIV) are cytoplasmic.

It belongs to the Alpharetroviruses envelope glycoprotein family. Heterodimer with the transmembrane protein. The mature envelope protein (Env) consists of a trimer of SU-TM heterodimers attached by a labile interchain disulfide bond. In terms of assembly, heterodimer with the surface protein. The mature envelope protein (Env) consists of a trimer of SU-TM heterodimers attached by a labile interchain disulfide bond. In terms of processing, specific enzymatic cleavages in vivo yield mature proteins. Envelope glycoproteins are synthesized as an inactive precursor that is N-glycosylated and processed likely by host cell furin or by a furin-like protease in the Golgi to yield the mature SU and TM proteins. The cleavage site between SU and TM requires the minimal sequence [KR]-X-[KR]-R. The transmembrane protein is palmitoylated. Palmitoylation is necessary for glycoprotein function and infectivity.

The protein resides in the virion membrane. It localises to the host cell membrane. Its function is as follows. The surface protein (SU) attaches the virus to the host cell by binding to its receptor. This interaction triggers the refolding of the transmembrane protein (TM) thereby unmasking its fusion peptide and the formation of a reactive thiolate to activate its fusogenic potential. Fusion occurs at the host cell plasma membrane. In terms of biological role, the transmembrane protein (TM) acts as a class I viral fusion protein. Under the current model, the protein has at least 3 conformational states: pre-fusion native state, pre-hairpin intermediate state, and post-fusion hairpin state. During viral and target cell membrane fusion, the coiled coil regions (heptad repeats) assume a trimer-of-hairpins structure, positioning the fusion peptide in close proximity to the C-terminal region of the ectodomain. The formation of this structure appears to drive apposition and subsequent fusion of viral and target cell membranes. Membranes fusion leads to delivery of the nucleocapsid into the cytoplasm. This is Envelope glycoprotein gp95 (env) from Galliformes.